A 58-amino-acid chain; its full sequence is MATVKVTLIKSVSGRLPNHKLCVKGLGLRRIGHTVEVQDTPENRGMINKAYYMLKVEG.

It belongs to the universal ribosomal protein uL30 family. Part of the 50S ribosomal subunit.

This is Large ribosomal subunit protein uL30 from Pseudomonas putida (strain ATCC 700007 / DSM 6899 / JCM 31910 / BCRC 17059 / LMG 24140 / F1).